We begin with the raw amino-acid sequence, 23 residues long: uncharacterized protein (23 aa).

Residues 3 to 23 form a helical membrane-spanning segment; sequence YFFMGISFMVIVWAGTFALMI.

It is found in the cell inner membrane. This is an uncharacterized protein from Escherichia coli (strain K12).